Here is a 218-residue protein sequence, read N- to C-terminus: Carnitine transport permease protein OpuCB (218 aa).

An ABC transmembrane type-1 domain is found at 19–198 (TWQHLFISLS…ILALVVEFAL (180 aa)). The next 5 helical transmembrane spans lie at 23–43 (LFISLSAVILGIAVAVPTGIL), 48–68 (PKVANFVIGVVSVLQTVPSLA), 79–101 (VGTLPAIIALFIYALLPILRNTF), 149–169 (VIAWATLASYIGAGGLGDFIF), and 179–199 (LILGGAIPVTILALVVEFALG).

It belongs to the binding-protein-dependent transport system permease family. The complex is composed of two ATP-binding proteins (OpuCA), two transmembrane proteins (OpuCB and OpuCD) and a solute-binding protein (OpuCC).

It localises to the cell membrane. Part of the ABC transporter complex OpuCABCD involved in carnitine uptake. Probably responsible for the translocation of the substrate across the membrane. Involved, with BetL and GbuABC, in osmoprotection and cryoprotection of Listeria. This Listeria monocytogenes protein is Carnitine transport permease protein OpuCB (opuCB).